The following is a 359-amino-acid chain: MLELNFSQQLGDLHLQVATDLPAQGITAIFGLSGAGKTSLINVIGGLTRPQQGRVILNGRVLVDAEKNIYLPPEKRRVGYVFQDARLFPHYRVRGNLQYGMAASMRGQFDAIVGLLGIEPLLNRFPFTLSGGEKQRVAIGRALLTAPELLLMDEPLASLDLPRKRELLPYLERLAQDVNTPILYVSHSMDEILRLADQVVVMDAGKVRAVGGLEEVWASSALRPWLQREEPSSILRVSVIGHHDRYAMTALALGDQRLWVGKLDAAEGNSMRIRINAADVSLALQPPHSSSIRNILPVKVAECLDVDGQVDVKLAIGEQWLWARITPWARDELGLKPGQWVYAQIKSVSFNRQNGPVPD.

The 229-residue stretch at 1–229 folds into the ABC transporter domain; it reads MLELNFSQQL…SALRPWLQRE (229 aa). Residue 31-38 coordinates ATP; it reads GLSGAGKT. The 66-residue stretch at 289 to 354 folds into the Mop domain; that stretch reads SSSIRNILPV…IKSVSFNRQN (66 aa).

This sequence belongs to the ABC transporter superfamily. Molybdate importer (TC 3.A.1.8) family. In terms of assembly, the complex is composed of two ATP-binding proteins (ModC), two transmembrane proteins (ModB) and a solute-binding protein (ModA).

The protein resides in the cell inner membrane. It carries out the reaction molybdate(out) + ATP + H2O = molybdate(in) + ADP + phosphate + H(+). Part of the ABC transporter complex ModABC involved in molybdenum import. Responsible for energy coupling to the transport system. The sequence is that of Molybdenum import ATP-binding protein ModC from Yersinia pestis bv. Antiqua (strain Antiqua).